Here is a 150-residue protein sequence, read N- to C-terminus: Arginine repressor (150 aa).

Belongs to the ArgR family.

It is found in the cytoplasm. It functions in the pathway amino-acid biosynthesis; L-arginine biosynthesis [regulation]. Its function is as follows. Regulates arginine biosynthesis genes. The sequence is that of Arginine repressor from Symbiobacterium thermophilum (strain DSM 24528 / JCM 14929 / IAM 14863 / T).